We begin with the raw amino-acid sequence, 309 residues long: DnaJ protein ERDJ7 (309 aa).

The N-terminal stretch at 1–36 (MSQVGSAGEGSNSMAAAPPPRLLLLVVLLLVPVSNA) is a signal peptide. The Lumenal portion of the chain corresponds to 37–130 (IYCEEDDCYD…YRAYYGHKTD (94 aa)). The 65-residue stretch at 43–107 (DCYDLLGVKQ…STRGQYDYAI (65 aa)) folds into the J domain. N-linked (GlcNAc...) asparagine glycosylation occurs at asparagine 55. A helical membrane pass occupies residues 131–151 (PRAVLIGLLLIISAFQYLNQF). Residues 152–219 (GRYSKAIETV…GVEKPSLWRL (68 aa)) are Cytoplasmic-facing. The helical transmembrane segment at 220–242 (YGVQFILLPYSIGKVLSWKFCWF) threads the bilayer. The Lumenal segment spans residues 243-309 (WRYRIKKLPY…EMRKESKRRR (67 aa)).

The protein localises to the endoplasmic reticulum membrane. May play a role in protein folding in the endoplasmic reticulum. This Oryza sativa subsp. japonica (Rice) protein is DnaJ protein ERDJ7.